The following is a 95-amino-acid chain: Homeotic protein bicoid (95 aa).

2 disordered regions span residues 1-29 (NLEP…STGM) and 42-63 (GKPS…MMHD).

It belongs to the paired homeobox family. Bicoid subfamily.

Its subcellular location is the nucleus. In terms of biological role, bicoid is polarity protein that provides positional cues for the development of head and thoracic segments. BCD regulates the expression of zygotic genes, possibly through its homeodomain, and inhibits the activity of other maternal gene products. The protein is Homeotic protein bicoid (bcd) of Drosophila subobscura (Fruit fly).